The following is an 825-amino-acid chain: Neuroligin-3 (825 aa).

The signal sequence occupies residues 1–34; sequence MWLQPSLSLSPTPTVGRSLCLTLGFLSLVLRAST. Residues 35–686 lie on the Extracellular side of the membrane; sequence QAPAPTVNTH…NPRDYSTELS (652 aa). Residue Asn-95 is glycosylated (N-linked (GlcNAc...) asparagine). Residues Cys-103 and Cys-138 are joined by a disulfide bond. The segment at 151–172 is disordered; that stretch reads SGAKKQGEDLADNDGDEDEDIR. Acidic residues predominate over residues 159-171; that stretch reads DLADNDGDEDEDI. 2 disulfides stabilise this stretch: Cys-317/Cys-328 and Cys-487/Cys-521. An N-linked (GlcNAc...) asparagine glycan is attached at Asn-522. Polar residues-rich tracts occupy residues 622-633 and 654-666; these read TKVPPPDTTHSS and AYSNENAPGSWNG. A disordered region spans residues 622 to 668; the sequence is TKVPPPDTTHSSHITRRPNGKTWSTKRPAISPAYSNENAPGSWNGDQ. A helical membrane pass occupies residues 687–707; the sequence is VTIAVGASLLFLNVLAFAALY. Residues 708–825 lie on the Cytoplasmic side of the membrane; sequence YRKDKRRQEP…LPHSHSTTRV (118 aa). Phosphoserine is present on Ser-722. Tyr-769 carries the post-translational modification Phosphotyrosine.

It belongs to the type-B carboxylesterase/lipase family. As to quaternary structure, homodimer, and heterodimer with NLGN1 and NLGN2. Interacts with neurexins NRXN1, NRXN2 and NRXN3. Interaction with neurexins is mediated by heparan sulfate glycan modification on neurexin. Interacts (via its C-terminus) with DLG4/PSD-95 (via PDZ domain 3). As to expression, brain and arteries (at protein level). Detected in heart, brain, spleen, lung, liver, skeletal muscle, kidney and testis. Expressed in olfactory bulb and olfactory epithelium. Found in olfactory ensheathing glia but not in olfactory neurons, and in developing peripheral glia.

Its subcellular location is the cell membrane. The protein localises to the synapse. Its function is as follows. Cell surface protein involved in cell-cell-interactions via its interactions with neurexin family members. Plays a role in synapse function and synaptic signal transmission, and probably mediates its effects by recruiting and clustering other synaptic proteins. May promote the initial formation of synapses, but is not essential for this. May also play a role in glia-glia or glia-neuron interactions in the developing peripheral nervous system. This is Neuroligin-3 (Nlgn3) from Mus musculus (Mouse).